Consider the following 415-residue polypeptide: Succinate--CoA ligase [GDP-forming] subunit beta, mitochondrial (415 aa).

Residues 1–19 (MLRAAGNLSKSMMKSQRRF) constitute a mitochondrion transit peptide. Residues 28-258 (KEILEKHGCS…SAAYRQKEIF (231 aa)) form the ATP-grasp domain. GTP-binding positions include Gln-39, 72–74 (GRG), and Val-130. Mg(2+)-binding residues include Asn-227 and Asp-241. Substrate is bound by residues Asn-292 and 349–351 (GIV).

This sequence belongs to the succinate/malate CoA ligase beta subunit family. GTP-specific subunit beta subfamily. As to quaternary structure, heterodimer of an alpha and a beta subunit. The beta subunit determines specificity for GTP. Requires Mg(2+) as cofactor.

Its subcellular location is the mitochondrion. It catalyses the reaction GTP + succinate + CoA = succinyl-CoA + GDP + phosphate. It participates in carbohydrate metabolism; tricarboxylic acid cycle; succinate from succinyl-CoA (ligase route): step 1/1. Functionally, GTP-specific succinyl-CoA synthetase functions in the citric acid cycle (TCA), coupling the hydrolysis of succinyl-CoA to the synthesis of GTP and thus represents the only step of substrate-level phosphorylation in the TCA. The beta subunit provides nucleotide specificity of the enzyme and binds the substrate succinate, while the binding sites for coenzyme A and phosphate are found in the alpha subunit. This is Succinate--CoA ligase [GDP-forming] subunit beta, mitochondrial from Caenorhabditis elegans.